The following is a 2138-amino-acid chain: Protein virilizer homolog (2138 aa).

Disordered regions lie at residues Arg-1503 to Val-1574, Asn-1638 to Gln-1664, Pro-1855 to Gly-1881, Pro-2013 to Ser-2035, and Tyr-2058 to Gly-2094. Residues Glu-1528–Gln-1541 show a composition bias toward polar residues. 2 stretches are compositionally biased toward polar residues: residues Asp-1862–Gly-1881 and Gln-2025–Ser-2035.

This sequence belongs to the vir family. In terms of assembly, interacts with MTB, FIP37 and HAKAI. Associates with MTA, MTB, FIP37 and HAKAI to form the m6A writer complex which is essential for adenosine methylation at specific mRNA sequences.

Its subcellular location is the nucleus speckle. The protein resides in the nucleus. It is found in the nucleoplasm. Functionally, subunit of the N6-methyltransferase complex, a multiprotein complex that mediates N6-methyladenosine (m6A) methylation at the 5'-[AG]GAC-3' consensus sites of some mRNAs. Associates with MTA, MTB, FIP37 and HAKAI to form the m6A writer complex which is essential for adenosine methylation at specific mRNA sequences. N6-methyladenosine (m6A) plays a role in mRNA stability, processing, translation efficiency and editing. This Arabidopsis thaliana (Mouse-ear cress) protein is Protein virilizer homolog.